The sequence spans 626 residues: L-amino-acid oxidase 4 (626 aa).

The first 18 residues, 1–18, serve as a signal peptide directing secretion; that stretch reads KSFFRSLVAASLVIVSYS. Asn54 carries N-linked (GlcNAc...) asparagine glycosylation. Residues Gly75, Glu94, Ala95, Arg102, Met122, and Arg123 each contribute to the FAD site. Arg123 is a binding site for L-glutamate. Residue Arg123 coordinates L-glutamine. An L-lysine-binding site is contributed by Arg123. Arg123 provides a ligand contact to L-phenylalanine. Residues Asn164, Asn193, and Asn331 are each glycosylated (N-linked (GlcNAc...) asparagine). Val334 provides a ligand contact to FAD. Tyr457 contributes to the L-glutamate binding site. Tyr457 is a binding site for L-glutamine. Tyr457 lines the L-lysine pocket. Tyr457 contributes to the L-phenylalanine binding site. Residue Glu551 participates in FAD binding. Position 558 (Ala558) interacts with L-phenylalanine. The FAD site is built by Trp559 and Val560.

It belongs to the flavin monoamine oxidase family. FIG1 subfamily. Homodimer. It depends on FAD as a cofactor. Post-translationally, out of the 4 glycosylated residues, Asn-54 is hypermannosylated. The presence of a hypermannosylated N-glycan on Asn-54 leads to adoption of a more active conformation in the absence of acid activation.

It localises to the secreted. The enzyme catalyses an L-alpha-amino acid + O2 + H2O = a 2-oxocarboxylate + H2O2 + NH4(+). It catalyses the reaction L-lysine + O2 + H2O = 6-amino-2-oxohexanoate + H2O2 + NH4(+). The catalysed reaction is L-glutamate + O2 + H2O = H2O2 + 2-oxoglutarate + NH4(+). It carries out the reaction L-arginine + O2 + H2O = 5-guanidino-2-oxopentanoate + H2O2 + NH4(+). The enzyme catalyses L-leucine + O2 + H2O = 4-methyl-2-oxopentanoate + H2O2 + NH4(+). It catalyses the reaction L-asparagine + O2 + H2O = 2-oxosuccinamate + H2O2 + NH4(+). The catalysed reaction is L-histidine + O2 + H2O = 3-(imidazol-5-yl)pyruvate + H2O2 + NH4(+). It carries out the reaction L-isoleucine + O2 + H2O = (S)-3-methyl-2-oxopentanoate + H2O2 + NH4(+). The enzyme catalyses L-methionine + O2 + H2O = 4-methylsulfanyl-2-oxobutanoate + H2O2 + NH4(+). It catalyses the reaction L-phenylalanine + O2 + H2O = 3-phenylpyruvate + H2O2 + NH4(+). The catalysed reaction is L-tyrosine + O2 + H2O = 3-(4-hydroxyphenyl)pyruvate + H2O2 + NH4(+). It carries out the reaction L-glutamine + O2 + H2O = 2-oxoglutaramate + H2O2 + NH4(+). The enzyme catalyses L-alanine + O2 + H2O = pyruvate + H2O2 + NH4(+). Its activity is regulated as follows. LAAO4 is activated by exposure to acidic pH, the detergent sodium dodecyl sulfate, or freezing. Its function is as follows. Catalyzes the oxidative deamination of L-amino acids with molecular oxygen to the corresponding alpha-keto acids and ammonia. L-glutamine shows the highest relative activity but LAAO4 has a broad substrate specificity, including L-amino acids with big aromatic, acidic and basic side chains. Methyl esters of these L-amino acids are also accepted, ethyl esters are converted but with lower activity, whereas D-Amino acids are not converted. No reaction is detected for small polar amino acids such as L-cysteine or L-aspartate, and very little for small, branched hydrophobic amino acids like L-valine. The polypeptide is L-amino-acid oxidase 4 (Hebeloma cylindrosporum).